A 350-amino-acid polypeptide reads, in one-letter code: Ion-translocating oxidoreductase complex subunit D (350 aa).

The next 4 helical transmembrane spans lie at Y37–A57, A78–V109, A124–A144, and T158–I178. T185 is subject to FMN phosphoryl threonine. A run of 5 helical transmembrane segments spans residues S212 to L232, W239 to I259, F264 to A284, L298 to P318, and D319 to V339.

Belongs to the NqrB/RnfD family. As to quaternary structure, the complex is composed of six subunits: RnfA, RnfB, RnfC, RnfD, RnfE and RnfG. It depends on FMN as a cofactor.

It localises to the cell inner membrane. Functionally, part of a membrane-bound complex that couples electron transfer with translocation of ions across the membrane. This is Ion-translocating oxidoreductase complex subunit D from Shewanella frigidimarina (strain NCIMB 400).